The sequence spans 740 residues: Catalase-peroxidase 2 (740 aa).

The signal sequence occupies residues 1–27 (MFKKTKPRISILALTISCAIYSGAALA). Positions 106–228 (WHSAGTYRIY…LAAVQMGLIY (123 aa)) form a cross-link, tryptophyl-tyrosyl-methioninium (Trp-Tyr) (with M-254). Catalysis depends on His107, which acts as the Proton acceptor. Residues 228 to 254 (YVNPEGPNGVPDPLLAAKDIRDTFGRM) constitute a cross-link (tryptophyl-tyrosyl-methioninium (Tyr-Met) (with W-106)). His269 is a binding site for heme b.

It belongs to the peroxidase family. Peroxidase/catalase subfamily. Homodimer or homotetramer. The cofactor is heme b. In terms of processing, formation of the three residue Trp-Tyr-Met cross-link is important for the catalase, but not the peroxidase activity of the enzyme.

It carries out the reaction H2O2 + AH2 = A + 2 H2O. The catalysed reaction is 2 H2O2 = O2 + 2 H2O. Its function is as follows. Bifunctional enzyme with both catalase and broad-spectrum peroxidase activity. The sequence is that of Catalase-peroxidase 2 from Cellvibrio japonicus (strain Ueda107) (Pseudomonas fluorescens subsp. cellulosa).